The following is a 3172-amino-acid chain: Erythronolide synthase EryA3 (3172 aa).

In terms of domain architecture, Ketosynthase family 3 (KS3) 1 spans 38–452 (GEPIAIVGMA…GTNAHVIVEE (415 aa)). Module regions lie at residues 41 to 1464 (IAIV…DHYL) and 1492 to 2891 (IAIV…DHIG). Cys199 functions as the Acyl-thioester intermediate; for beta-ketoacyl synthase 1 activity in the catalytic mechanism. Residues His334 and His374 each act as for beta-ketoacyl synthase 1 activity in the active site. Residues 557-874 (VFPGQGAQWQ…LGEAYAQGVE (318 aa)) form an acyltransferase 1 region. Ser643 functions as the Acyl-ester intermediate; for acyltransferase 1 activity in the catalytic mechanism. A beta-ketoacyl reductase 1 region spans residues 1117 to 1294 (GTVLVTGGTG…VTSIAWGLWA (178 aa)). Residues 1125–1128 (TGGI), 1148–1151 (GRRG), 1177–1178 (DV), Lys1229, and 1249–1250 (FS) contribute to the NADP(+) site. Tyr1264 serves as the catalytic Acyl-ester intermediate; for beta-ketoacyl reductase 1 activity. In terms of domain architecture, Carrier 1 spans 1392-1467 (EHLAHLIRAE…RLADHYLERL (76 aa)). Position 1427 is an O-(pantetheine 4'-phosphoryl)serine (Ser1427). Residues 1489 to 1916 (DDPIAIVGMA…GTNAHVIIAE (428 aa)) enclose the Ketosynthase family 3 (KS3) 2 domain. Residue Cys1661 is the Acyl-thioester intermediate; for beta-ketoacyl synthase 2 activity of the active site. Catalysis depends on for beta-ketoacyl synthase 2 activity residues His1797 and His1837. Positions 2022-2331 (VFVFPGQGAQ…LARAHVHGVA (310 aa)) are acyltransferase 2. Ser2112 serves as the catalytic Acyl-ester intermediate; for acyltransferase 2 activity. The tract at residues 2557-2731 (GTALVTGGTG…ATSVAWGAWA (175 aa)) is beta-ketoacyl reductase 2. Residues 2565-2568 (TGAL), 2588-2591 (SRRG), 2617-2618 (DV), Lys2666, and 2686-2687 (FS) contribute to the NADP(+) site. Tyr2701 acts as the Acyl-ester intermediate; for beta-ketoacyl reductase 2 activity in catalysis. Positions 2819–2894 (QELLEFTHSH…RLADHIGQQL (76 aa)) constitute a Carrier 2 domain. Ser2854 carries the O-(pantetheine 4'-phosphoryl)serine modification. A thioesterase region spans residues 2960 to 3166 (ICCAGTAAIS…DAIARHIDAW (207 aa)). Residue Thr2965 participates in substrate binding. Catalysis depends on Ser3031, which acts as the Nucleophile; for thioesterase activity. Residues Ala3032 and Asp3058 each coordinate substrate. Residue His3148 is the Proton acceptor; for thioesterase activity of the active site.

In terms of assembly, homodimer. Erythronolide synthase is composed of EryAI, EryAII and EryAIII multimodular (2 modules) polypeptides each coding for a functional synthase subunit which participates in 2 of the six FAS-like elongation steps required for formation of the polyketide. Module 1, 2, 3, 4, 5, and 6 participating in biosynthesis steps 1, 2, 3, 4, 5, and 6, respectively. The cofactor is pantetheine 4'-phosphate.

The catalysed reaction is 6 (S)-methylmalonyl-CoA + propanoyl-CoA + 6 NADPH + 12 H(+) = 6-deoxyerythronolide B + 6 CO2 + 6 NADP(+) + 7 CoA + H2O. Its pathway is antibiotic biosynthesis; erythromycin biosynthesis. With respect to regulation, inhibited by diphenyl phosphonates derivatives such as diphenyl allylphosphonate. Its function is as follows. Involved in the biosynthesis of antibiotic erythromycin via the biosynthesis of its aglycone precursor, 6-deoxyerythronolide B (6-dEB). In Saccharopolyspora erythraea (Streptomyces erythraeus), this protein is Erythronolide synthase EryA3.